The primary structure comprises 135 residues: Large ribosomal subunit protein uL16c (135 aa).

The protein belongs to the universal ribosomal protein uL16 family. In terms of assembly, part of the 50S ribosomal subunit.

The protein resides in the plastid. The sequence is that of Large ribosomal subunit protein uL16c from Epifagus virginiana (Beechdrops).